A 74-amino-acid polypeptide reads, in one-letter code: Protein YkgV (74 aa).

In Escherichia coli (strain K12), this protein is Protein YkgV.